Here is an 842-residue protein sequence, read N- to C-terminus: Axin-1 (842 aa).

The interval 1–75 (MSVKGKGFPL…LDLGYEPEGS (75 aa)) is disordered. Over residues 34–46 (TTDQRPFSHTYYS) the composition is skewed to polar residues. In terms of domain architecture, RGS spans 88 to 211 (SLHSLLDDQD…LKSDIYLEYT (124 aa)). 9 disordered regions span residues 218–242 (PKNY…PTLN), 277–297 (SHCA…PGTW), 316–344 (TSAN…DGIP), 414–451 (KRVR…NSRY), 482–532 (KTPG…AKVD), 543–562 (YHHV…DGES), 615–637 (KKAD…EDSE), 656–675 (HKKS…TELA), and 729–754 (RLEE…KNVS). Polar residues predominate over residues 316-339 (TSANDSEQQSMSSDADTMSLTDSS). The segment at 348-433 (LRKHYRREMQ…DGDVSSGPSV (86 aa)) is interaction with GSK3B. Residues 434–508 (ISHKLPSGPP…RSPDGHLSKT (75 aa)) form an interaction with beta-catenin region. Residues 543 to 552 (YHHVHHHGGV) show a composition bias toward basic residues. The span at 615–626 (KKADLGKSESAS) shows a compositional bias: basic and acidic residues. Residues 760 to 842 (CDNIVVAYYF…KIIGQVEKID (83 aa)) form the DIX domain.

Homodimer. Interacts with hwa; leading to promote the tankyrase-mediated degradation of axin1. Post-translationally, ADP-ribosylated by tankyrase tnks and tnks2. Poly-ADP-ribosylated protein is recognized by rnf146, followed by ubiquitination at 'Lys-48' and subsequent activation of the Wnt signaling pathway. In terms of processing, ubiquitinated by rnf146 when poly-ADP-ribosylated, leading to its degradation and subsequent activation of the Wnt signaling pathway.

It is found in the cytoplasm. It localises to the nucleus. Its subcellular location is the membrane. The protein localises to the cell membrane. Its function is as follows. Component of the beta-catenin destruction complex required for regulating ctnnb1 levels through phosphorylation and ubiquitination, and modulating Wnt-signaling. Controls dorsoventral patterning via two opposing effects; down-regulates ctnnb1 to inhibit the Wnt signaling pathway and ventralize embryos, but also dorsalizes embryos by activating a Wnt-independent JNK signaling pathway. The chain is Axin-1 (axin1) from Xenopus laevis (African clawed frog).